A 290-amino-acid chain; its full sequence is Nucleotide-binding protein LAR_0375 (290 aa).

13 to 20 contributes to the ATP binding site; the sequence is GMSGAGKT. 63–66 contributes to the GTP binding site; sequence DMRS.

Belongs to the RapZ-like family.

Functionally, displays ATPase and GTPase activities. This Limosilactobacillus reuteri subsp. reuteri (strain JCM 1112) (Lactobacillus reuteri) protein is Nucleotide-binding protein LAR_0375.